Reading from the N-terminus, the 310-residue chain is MAVSVQDLLDKIHFHVIYSTETALQKEITTSEIMRPGLEMAGYFDYFTPERIQLFGMKEWSYMMTVVGDNRYDLLKKVMAKETPVVIVARNLEIPSEMVAAAKKADIVLLQSREATSRLNSVLTSFLDERLAERTTVHGVLMDIFGVGVLIQGASGIGKSETGLELVKRGHRLVADDRVDVFQRDAFTLSGEPAEILRNMIEIRGVGIIDVMSLFGAGAVKDSTDIDMAIYLEYYDKEKAFDRLGNAPTIVEFSDVEVPQTRIPVKTGRNVSVIVEAAVMNFRAKQMGFDATKTFEDRLTDLISHNKESQ.

Residues H138 and K159 contribute to the active site. An ATP-binding site is contributed by 153-160 (GASGIGKS). S160 provides a ligand contact to Mg(2+). D177 functions as the Proton acceptor; for phosphorylation activity. Proton donor; for dephosphorylation activity in the catalytic mechanism. The important for the catalytic mechanism of both phosphorylation and dephosphorylation stretch occupies residues 201 to 210 (IEIRGVGIID). E202 provides a ligand contact to Mg(2+). The active site involves R243. The tract at residues 264-269 (PVKTGR) is important for the catalytic mechanism of dephosphorylation.

This sequence belongs to the HPrK/P family. In terms of assembly, homohexamer. Requires Mg(2+) as cofactor.

The enzyme catalyses [HPr protein]-L-serine + ATP = [HPr protein]-O-phospho-L-serine + ADP + H(+). It carries out the reaction [HPr protein]-O-phospho-L-serine + phosphate + H(+) = [HPr protein]-L-serine + diphosphate. Its function is as follows. Catalyzes the ATP- as well as the pyrophosphate-dependent phosphorylation of a specific serine residue in HPr, a phosphocarrier protein of the phosphoenolpyruvate-dependent sugar phosphotransferase system (PTS). HprK/P also catalyzes the pyrophosphate-producing, inorganic phosphate-dependent dephosphorylation (phosphorolysis) of seryl-phosphorylated HPr (P-Ser-HPr). The two antagonistic activities of HprK/P are regulated by several intracellular metabolites, which change their concentration in response to the absence or presence of rapidly metabolisable carbon sources (glucose, fructose, etc.) in the growth medium. Therefore, by controlling the phosphorylation state of HPr, HPrK/P is a sensor enzyme that plays a major role in the regulation of carbon metabolism and sugar transport: it mediates carbon catabolite repression (CCR), and regulates PTS-catalyzed carbohydrate uptake and inducer exclusion. This chain is HPr kinase/phosphorylase, found in Lactococcus lactis subsp. cremoris (strain MG1363).